A 760-amino-acid polypeptide reads, in one-letter code: Catecholate siderophore receptor Fiu (760 aa).

The first 31 residues, 1–31 (MENNRNFPARQFHSLTFFAGLCIGITPVAQA), serve as a signal peptide directing secretion. The 109-residue stretch at 67–175 (PVADTTRTMT…PTGSINMISK (109 aa)) folds into the TBDR plug domain. In terms of domain architecture, TBDR beta-barrel spans 180–760 (DSGIDASASI…TFLLTANMHF (581 aa)). The TonB C-terminal box signature appears at 743 to 760 (RYHPGEPRTFLLTANMHF).

Belongs to the TonB-dependent receptor family.

Its subcellular location is the cell outer membrane. Involved in the active transport across the outer membrane of iron complexed with catecholate siderophores such as dihydroxybenzoylserine and dihydroxybenzoate. It derives its energy for transport by interacting with the trans-periplasmic membrane protein TonB. Can also transport catechol-substituted cephalosporins. Receptor for microcins M, H47 and E492. The chain is Catecholate siderophore receptor Fiu (fiu) from Escherichia coli (strain UTI89 / UPEC).